Here is a 275-residue protein sequence, read N- to C-terminus: Monooxygenase af470 (275 aa).

It carries out the reaction prefumagillin + NADPH + 2 O2 = fumagillin + acetaldehyde + NADP(+) + H2O. It functions in the pathway secondary metabolite biosynthesis; terpenoid biosynthesis. In terms of biological role, monooxygenase; part of the gene cluster that mediates the biosynthesis of fumagillin, a meroterpenoid that has numerous biological activities including irreversible inhibition of human type 2 methionine aminopeptidase (METAP2). Within the pathway, the monooxygenase af470 catalyzes the oxidative cleavage of prefumagillin to yield the final compound of the pathway, fumagillin. The pathway begins with the conversion of farnesyl pyrophosphate (FPP) to beta-trans-bergamotene by the membrane-bound beta-trans-bergamotene synthase af520. The multifunctional cytochrome P450 monooxygenase af510 then converts beta-trans-bergamotene into 5-keto-demethoxyfumagillol via several oxydation steps. 5-keto-demethoxyfumagillol is then subjected to successive C-6 hydroxylation and O-methylation by the dioxygenase af480 and O-methyltransferase af390-400, respectively, to yield 5-keto-fumagillol, which is then stereoselectively reduced by the keto-reductase af490 to 5R-hydroxy-seco-sesquiterpene. The next step is the polyketide transferase af380-catalyzed transfer of a dodecapentaenoyl group synthesized by the polyketide synthase af370 onto 5R-hydroxy-seco-sesquiterpene which leads to the production of prefumagillin. Finally, oxidative cleavage by the monooxygenase af470 converts prefumagillin to fumagillin. In Aspergillus fumigatus (strain ATCC MYA-4609 / CBS 101355 / FGSC A1100 / Af293) (Neosartorya fumigata), this protein is Monooxygenase af470.